The chain runs to 325 residues: Eukaryotic translation initiation factor 3 subunit I (325 aa).

WD repeat units follow at residues 8-47, 50-89, 144-183, 186-225, and 283-324; these read GHER…RLGT, GHTG…QLAL, CSES…VLKK, EHTK…HVKT, and GHFG…FELE.

The protein belongs to the eIF-3 subunit I family. Component of the eukaryotic translation initiation factor 3 (eIF-3) complex, which is composed of 13 subunits: eif3a, eif3b, eif3c, eif3d, eif3e, eif3f, eif3g, eif3h, eif3i, eif3j, eif3k, eif3l and eif3m.

It localises to the cytoplasm. Functionally, component of the eukaryotic translation initiation factor 3 (eIF-3) complex, which is involved in protein synthesis of a specialized repertoire of mRNAs and, together with other initiation factors, stimulates binding of mRNA and methionyl-tRNAi to the 40S ribosome. The eIF-3 complex specifically targets and initiates translation of a subset of mRNAs involved in cell proliferation. In Danio rerio (Zebrafish), this protein is Eukaryotic translation initiation factor 3 subunit I (eif3i).